The following is a 286-amino-acid chain: 2-hydroxy-6-oxononadienedioate/2-hydroxy-6-oxononatrienedioate hydrolase (286 aa).

The AB hydrolase-1 domain occupies 36–271 (VIMLHGGGPG…RCGHWAQWEH (236 aa)). Histidine 265 (proton acceptor) is an active-site residue.

Belongs to the AB hydrolase superfamily. BphD family. Homodimer.

It catalyses the reaction (2Z,4E)-2-hydroxy-6-oxonona-2,4-dienedioate + H2O = (2Z)-2-hydroxypenta-2,4-dienoate + succinate + H(+). The enzyme catalyses (2Z,4E,7E)-2-hydroxy-6-oxonona-2,4,7-trienedioate + H2O = (2Z)-2-hydroxypenta-2,4-dienoate + fumarate + H(+). Its pathway is aromatic compound metabolism; 3-phenylpropanoate degradation. Its function is as follows. Catalyzes the cleavage of the C5-C6 bond of 2-hydroxy-6-oxononadienedioate, and probably also 2-hydroxy-6-oxononatrienedioate, a dienol ring fission product of the bacterial meta-cleavage pathway for degradation of phenylpropionic acid. In Comamonas testosteroni (Pseudomonas testosteroni), this protein is 2-hydroxy-6-oxononadienedioate/2-hydroxy-6-oxononatrienedioate hydrolase (mhpC).